A 614-amino-acid polypeptide reads, in one-letter code: Zinc metalloproteinase-disintegrin-like Eoc1 (614 aa).

An N-terminal signal peptide occupies residues 1 to 19 (MQVLLITISLAVLPYLGSS). A propeptide spanning residues 20–193 (IILESGIVND…KASQLNLTPE (174 aa)) is cleaved from the precursor. Pyrrolidone carboxylic acid is present on glutamine 194. The Peptidase M12B domain occupies 202-398 (KHIKVAIVAD…KMPQCILIKP (197 aa)). An N-linked (GlcNAc...) asparagine glycan is attached at asparagine 268. Intrachain disulfides connect cysteine 313–cysteine 393, cysteine 353–cysteine 377, and cysteine 355–cysteine 360. Histidine 338 contacts Zn(2+). The active site involves glutamate 339. 2 residues coordinate Zn(2+): histidine 342 and histidine 348. Asparagine 376 carries an N-linked (GlcNAc...) asparagine glycan. Positions 406 to 492 (PPVCGNSLVE…ECPADQFQRN (87 aa)) constitute a Disintegrin domain. Positions 408, 411, 413, 415, 418, and 421 each coordinate Ca(2+). Cystine bridges form between cysteine 409–cysteine 438, cysteine 420–cysteine 433, cysteine 422–cysteine 428, cysteine 432–cysteine 455, cysteine 446–cysteine 452, cysteine 451–cysteine 477, cysteine 464–cysteine 484, cysteine 471–cysteine 503, cysteine 496–cysteine 508, cysteine 515–cysteine 565, cysteine 530–cysteine 576, cysteine 543–cysteine 553, cysteine 560–cysteine 602, and cysteine 596–cysteine 607. A D/ECD-tripeptide motif is present at residues 470-472 (ECD). Asparagine 498 carries an N-linked (GlcNAc...) asparagine glycan.

Belongs to the venom metalloproteinase (M12B) family. P-III subfamily. P-IIIc sub-subfamily. In terms of assembly, heterodimer; disulfide-linked. Zn(2+) is required as a cofactor. As to expression, expressed by the venom gland.

It localises to the secreted. Functionally, this metalloproteinase hydrolyzes azocasein, and oxidized insulin B-chain. Also hydrolyzes the alpha-chain (FGA) and more slowly the beta-chain of fibrinogen (FGB), without affecting the gamma-chain. Does not cleave fibrin. Inhibits endothelial cell adhesion to extracellular matrix proteins such as fibrinogen, fibronectin, vitronectin, collagen I, and collagen IV. Induces apoptosis in vascular endothelial cells. In Echis ocellatus (Ocellated saw-scaled viper), this protein is Zinc metalloproteinase-disintegrin-like Eoc1 (Svmp3-Eoc1).